Consider the following 405-residue polypeptide: Acetate kinase (405 aa).

Residue asparagine 7 participates in Mg(2+) binding. Lysine 14 lines the ATP pocket. Arginine 99 serves as a coordination point for substrate. Catalysis depends on aspartate 156, which acts as the Proton donor/acceptor. ATP is bound by residues 215 to 219 (HLGNG), 290 to 292 (DMR), and 338 to 342 (GVGEH). A Mg(2+)-binding site is contributed by glutamate 391.

This sequence belongs to the acetokinase family. In terms of assembly, homodimer. Requires Mg(2+) as cofactor. It depends on Mn(2+) as a cofactor.

Its subcellular location is the cytoplasm. The enzyme catalyses acetate + ATP = acetyl phosphate + ADP. The protein operates within metabolic intermediate biosynthesis; acetyl-CoA biosynthesis; acetyl-CoA from acetate: step 1/2. Functionally, catalyzes the formation of acetyl phosphate from acetate and ATP. Can also catalyze the reverse reaction. This Nostoc punctiforme (strain ATCC 29133 / PCC 73102) protein is Acetate kinase.